A 247-amino-acid polypeptide reads, in one-letter code: Flagellin B1 (247 aa).

Positions 1–20 are excised as a propeptide; it reads MNKLLRKVRKAFSLKADNKA.

Belongs to the archaeal flagellin family. Glycosylated.

The protein localises to the archaeal flagellum. Its function is as follows. Flagellin is the subunit protein which polymerizes to form the filaments of archaeal flagella. The polypeptide is Flagellin B1 (Thermoplasma volcanium (strain ATCC 51530 / DSM 4299 / JCM 9571 / NBRC 15438 / GSS1)).